A 522-amino-acid chain; its full sequence is Kelch domain-containing protein 4 (522 aa).

The span at Met-1–Lys-10 shows a compositional bias: basic residues. The segment at Met-1–Glu-33 is disordered. A compositionally biased stretch (basic and acidic residues) spans Gly-11–Lys-24. Kelch repeat units follow at residues Glu-77–Gln-129, Gln-133–Arg-187, Gln-188–Gln-241, Gly-243–Ser-289, and Gln-308–Arg-361. Disordered stretches follow at residues Gln-346–Thr-378, Leu-402–Arg-432, and Asp-481–Asp-522. Phosphoserine occurs at positions 413 and 418. The Kelch 6 repeat unit spans residues Val-443–Glu-494.

This Pongo abelii (Sumatran orangutan) protein is Kelch domain-containing protein 4 (KLHDC4).